A 145-amino-acid polypeptide reads, in one-letter code: Meiotically up-regulated gene 124 protein (145 aa).

2 consecutive transmembrane segments (helical) span residues 18–38 (IILT…CPSI) and 95–115 (FAWS…NFFL).

It is found in the membrane. Its function is as follows. Has a role in meiosis. The polypeptide is Meiotically up-regulated gene 124 protein (mug124) (Schizosaccharomyces pombe (strain 972 / ATCC 24843) (Fission yeast)).